The chain runs to 502 residues: Chromatin structure-remodeling complex protein RSC58 (502 aa).

Residues 19–134 (SILNAASVKC…KFSSELLLRE (116 aa)) form the Bromo domain. A disordered region spans residues 336–378 (NEEGINRKQNDENNKNVDGKSNGVQDDGGDNDNDATIASANSE). The segment covering 339–353 (GINRKQNDENNKNVD) has biased composition (basic and acidic residues).

In terms of assembly, component of the two forms of the RSC complex composed of at least either RSC1 or RSC2, and ARP7, ARP9, LDB7, NPL6, RSC3, RSC30, RSC4, RSC58, RSC6, RSC8, RSC9, SFH1, STH1, HTL1 and probably RTT102. The complexes interact with histone and histone variant components of centromeric chromatin.

It localises to the nucleus. Functionally, component of the chromatin structure-remodeling complex (RSC), which is involved in transcription regulation and nucleosome positioning. RSC is responsible for the transfer of a histone octamer from a nucleosome core particle to naked DNA. The reaction requires ATP and involves an activated RSC-nucleosome intermediate. Remodeling reaction also involves DNA translocation, DNA twist and conformational change. As a reconfigurer of centromeric and flanking nucleosomes, RSC complex is required both for proper kinetochore function in chromosome segregation and, via a PKC1-dependent signaling pathway, for organization of the cellular cytoskeleton. The sequence is that of Chromatin structure-remodeling complex protein RSC58 (RSC58) from Saccharomyces cerevisiae (strain ATCC 204508 / S288c) (Baker's yeast).